A 576-amino-acid chain; its full sequence is Vacuolar protein sorting-associated protein vps5 (576 aa).

2 disordered regions span residues 1-60 (MLGH…PRKR) and 156-198 (DAAS…APQS). Residue T55 is modified to Phosphothreonine. Positions 156 to 169 (DAASSSAPNFTHTV) are enriched in polar residues. Low complexity predominate over residues 170–181 (SSASSQKQGSTS). Positions 200–317 (TPFYIQVHDP…KLFLEAETFD (118 aa)) constitute a PX domain. A 1,2-diacyl-sn-glycero-3-phospho-(1D-myo-inositol-3-phosphate) is bound by residues R244, K270, and R284. S332 carries the phosphoserine modification.

Belongs to the sorting nexin family. Component of the retromer complex which consists of vps29, vps26, vps35, vps5 and vps17.

The protein localises to the cytoplasm. Its subcellular location is the golgi apparatus. It is found in the membrane. Required for efficient sporulation target of PtdIns(3)P in vesicle transport required for onset of the forespore membrane formation. Functionally, plays a role in vesicular protein sorting. Required for the endosome-to-Golgi retrieval of the vacuolar protein sorting receptor pep1/vps10. Component of the membrane-associated retromer complex which is essential in endosome-to-Golgi retrograde transport. The vps29-vps26-vps35 subcomplex may be involved in cargo selection. This is Vacuolar protein sorting-associated protein vps5 (vps5) from Schizosaccharomyces pombe (strain 972 / ATCC 24843) (Fission yeast).